Reading from the N-terminus, the 504-residue chain is Glucan endo-1,3-beta-glucosidase 7 (504 aa).

An N-terminal signal peptide occupies residues 1–22 (MALSISIYFLLIFLSHFPSSHA). Glutamate 119 (proton donor) is an active-site residue. Glutamate 264 functions as the Nucleophile in the catalytic mechanism. Cysteine 365 and cysteine 427 are oxidised to a cystine.

The protein belongs to the glycosyl hydrolase 17 family. In terms of processing, contains two additional disulfide bonds.

The protein resides in the secreted. It is found in the cell wall. It carries out the reaction Hydrolysis of (1-&gt;3)-beta-D-glucosidic linkages in (1-&gt;3)-beta-D-glucans.. This Arabidopsis thaliana (Mouse-ear cress) protein is Glucan endo-1,3-beta-glucosidase 7.